A 238-amino-acid chain; its full sequence is Nuclear transcription factor Y subunit B-9 (238 aa).

A DNA-binding region spans residues 64–70 (MPIANVI). The interval 91-102 (IQECVSEYISFV) is subunit association domain (SAD). Positions 203–238 (RYYQNGSSGQDESSVGGGSSSSINGMPAFDHYGQYK) are disordered. The span at 208 to 227 (GSSGQDESSVGGGSSSSING) shows a compositional bias: low complexity.

The protein belongs to the NFYB/HAP3 subunit family. Heterotrimeric transcription factor composed of three components, NF-YA, NF-YB and NF-YC. NF-YB and NF-YC must interact and dimerize for NF-YA association and DNA binding. Interacts with PRN1. Expressed in green siliques. Present in etiolated seedlings.

The protein resides in the nucleus. Component of the NF-Y/HAP transcription factor complex. The NF-Y complex stimulates the transcription of various genes by recognizing and binding to a CCAAT motif in promoters. Acts as a central regulator of the embryogenesis. Required for the speciation of cotyledon identity and the completion of embryo maturation. Controls seed storage protein genes through the regulation of FUS3 and ABI3. Involved in the blue light (BL) and abscisic acid (ABA) signaling pathways. This is Nuclear transcription factor Y subunit B-9 (NFYB9) from Arabidopsis thaliana (Mouse-ear cress).